A 251-amino-acid polypeptide reads, in one-letter code: 1-(5-phosphoribosyl)-5-[(5-phosphoribosylamino)methylideneamino] imidazole-4-carboxamide isomerase (251 aa).

Asp8 acts as the Proton acceptor in catalysis. Residue Asp131 is the Proton donor of the active site.

The protein belongs to the HisA/HisF family.

The protein resides in the cytoplasm. It catalyses the reaction 1-(5-phospho-beta-D-ribosyl)-5-[(5-phospho-beta-D-ribosylamino)methylideneamino]imidazole-4-carboxamide = 5-[(5-phospho-1-deoxy-D-ribulos-1-ylimino)methylamino]-1-(5-phospho-beta-D-ribosyl)imidazole-4-carboxamide. It functions in the pathway amino-acid biosynthesis; L-histidine biosynthesis; L-histidine from 5-phospho-alpha-D-ribose 1-diphosphate: step 4/9. The chain is 1-(5-phosphoribosyl)-5-[(5-phosphoribosylamino)methylideneamino] imidazole-4-carboxamide isomerase from Burkholderia vietnamiensis (strain G4 / LMG 22486) (Burkholderia cepacia (strain R1808)).